The sequence spans 166 residues: Putative 4-hydroxy-4-methyl-2-oxoglutarate aldolase 3 (166 aa).

The residue at position 2 (Ala-2) is an N-acetylalanine. Residues 81–84 (GGNL) and Arg-103 each bind substrate. Asp-104 is a binding site for a divalent metal cation.

This sequence belongs to the class II aldolase/RraA-like family. In terms of assembly, homotrimer. Requires a divalent metal cation as cofactor.

The catalysed reaction is 4-hydroxy-4-methyl-2-oxoglutarate = 2 pyruvate. The enzyme catalyses oxaloacetate + H(+) = pyruvate + CO2. In terms of biological role, catalyzes the aldol cleavage of 4-hydroxy-4-methyl-2-oxoglutarate (HMG) into 2 molecules of pyruvate. Also contains a secondary oxaloacetate (OAA) decarboxylase activity due to the common pyruvate enolate transition state formed following C-C bond cleavage in the retro-aldol and decarboxylation reactions. The chain is Putative 4-hydroxy-4-methyl-2-oxoglutarate aldolase 3 from Arabidopsis thaliana (Mouse-ear cress).